Reading from the N-terminus, the 99-residue chain is A-type ATP synthase subunit F (99 aa).

This sequence belongs to the V-ATPase F subunit family. Has multiple subunits with at least A(3), B(3), C, D, E, F, H, I and proteolipid K(x).

Its subcellular location is the cell membrane. Its function is as follows. Component of the A-type ATP synthase that produces ATP from ADP in the presence of a proton gradient across the membrane. This is A-type ATP synthase subunit F from Methanococcus maripaludis (strain C6 / ATCC BAA-1332).